A 142-amino-acid chain; its full sequence is Large ribosomal subunit protein bL17 (142 aa).

The protein belongs to the bacterial ribosomal protein bL17 family. As to quaternary structure, part of the 50S ribosomal subunit. Contacts protein L32.

The sequence is that of Large ribosomal subunit protein bL17 from Chlamydia pneumoniae (Chlamydophila pneumoniae).